The chain runs to 386 residues: uncharacterized protein (386 aa).

11 helical membrane passes run Trp3–Ile23, Leu42–Trp62, Phe72–Gly92, Val102–Phe122, Ile145–Phe165, Phe183–Leu203, Trp212–Leu232, Thr244–Val264, Ile276–Gly296, Val308–Gly328, and Leu333–Ser353.

To R.prowazekii RP382.

The protein resides in the cell membrane. This is an uncharacterized protein from Aquifex aeolicus (strain VF5).